We begin with the raw amino-acid sequence, 280 residues long: 2,3,4,5-tetrahydropyridine-2,6-dicarboxylate N-succinyltransferase (280 aa).

It belongs to the transferase hexapeptide repeat family.

The protein resides in the cytoplasm. The catalysed reaction is (S)-2,3,4,5-tetrahydrodipicolinate + succinyl-CoA + H2O = (S)-2-succinylamino-6-oxoheptanedioate + CoA. Its pathway is amino-acid biosynthesis; L-lysine biosynthesis via DAP pathway; LL-2,6-diaminopimelate from (S)-tetrahydrodipicolinate (succinylase route): step 1/3. The protein is 2,3,4,5-tetrahydropyridine-2,6-dicarboxylate N-succinyltransferase of Methylorubrum extorquens (strain PA1) (Methylobacterium extorquens).